The chain runs to 822 residues: Fibroblast growth factor receptor 1 (822 aa).

The N-terminal stretch at 1-21 (MWGWKCLLFWAVLVTATLCTA) is a signal peptide. Topologically, residues 22–376 (RPAPTLPEQA…AVMTSPLYLE (355 aa)) are extracellular. In terms of domain architecture, Ig-like C2-type 1 spans 25–119 (PTLPEQAQPW…DTTYFSVNVS (95 aa)). Residues Cys55 and Cys101 are joined by a disulfide bond. N-linked (GlcNAc...) asparagine glycosylation is found at Asn77 and Asn117. Residues 120-162 (DALPSSEDDDDDDDSSSEEKETDNTKPNRRPVAPYWTSPEKME) form a disordered region. Residues 125–135 (SEDDDDDDDSS) are compositionally biased toward acidic residues. Positions 136–145 (SEEKETDNTK) are enriched in basic and acidic residues. Ig-like C2-type domains are found at residues 158-246 (PEKM…YQLD) and 255-357 (PILQ…AWLT). Residues 160–177 (KMEKKLHAVPAAKTVKFK) form a heparin-binding region. The cysteines at positions 178 and 230 are disulfide-linked. N-linked (GlcNAc...) asparagine glycans are attached at residues Asn227, Asn240, Asn264, Asn296, Asn317, and Asn330. Cys277 and Cys341 are oxidised to a cystine. The chain crosses the membrane as a helical span at residues 377–397 (IIIYCTGAFLISCMLGSVIIY). Topologically, residues 398–822 (KMKSGTKKSD…QLANSGLKRR (425 aa)) are cytoplasmic. Phosphotyrosine; by autocatalysis is present on Tyr463. Positions 478 to 767 (LVLGKPLGEG…VALTSNQEYL (290 aa)) constitute a Protein kinase domain. ATP-binding positions include 484-490 (LGEGCFG), Lys514, 562-564 (EYA), and Asn568. Phosphotyrosine; by autocatalysis occurs at positions 583 and 585. Asp623 functions as the Proton acceptor in the catalytic mechanism. Residues Arg627 and Asp641 each contribute to the ATP site. Residues Tyr653, Tyr654, Tyr730, and Tyr766 each carry the phosphotyrosine; by autocatalysis modification. Positions 782 to 792 (DTRSSTCSSGE) are enriched in polar residues. A disordered region spans residues 782–822 (DTRSSTCSSGEDSVFSHEPLPEEPCLPRHPTQLANSGLKRR).

It belongs to the protein kinase superfamily. Tyr protein kinase family. Fibroblast growth factor receptor subfamily. In terms of assembly, monomer. Homodimer after ligand binding. Interacts predominantly with FGF1 and FGF2, but can also interact with FGF3, FGF4, FGF5, FGF6, FGF8, FGF10, FGF19, FGF21, FGF22 and FGF23 (in vitro). Ligand specificity is determined by tissue-specific expression of isoforms, and differences in the third Ig-like domain are crucial for ligand specificity. Affinity for fibroblast growth factors (FGFs) is increased by heparan sulfate glycosaminoglycans that function as coreceptors. Likewise, KLB increases the affinity for FGF19, FGF21 and FGF23. Interacts (phosphorylated on Tyr-766) with PLCG1 (via SH2 domains). Interacts with FRS2. Interacts with RPS6KA1. Interacts (via C-terminus) with NEDD4 (via WW3 domain). Interacts with KL. Interacts with SHB (via SH2 domain). Interacts with GRB10. Interacts with ANOS1; this interaction does not interfere with FGF2-binding to FGFR1, but prevents binding of heparin-bound FGF2. Interacts with SOX2 and SOX3. Interacts with FLRT1, FLRT2 and FLRT3. Found in a ternary complex with FGF1 and ITGAV:ITGB3. In terms of processing, autophosphorylated. Binding of FGF family members together with heparan sulfate proteoglycan or heparin promotes receptor dimerization and autophosphorylation on tyrosine residues. Autophosphorylation occurs in trans between the two FGFR molecules present in the dimer and proceeds in a highly ordered manner. Initial autophosphorylation at Tyr-653 increases the kinase activity by a factor of 50 to 100. After this, Tyr-583 becomes phosphorylated, followed by phosphorylation of Tyr-463, Tyr-766, Tyr-583 and Tyr-585. In a third stage, Tyr-654 is autophosphorylated, resulting in a further tenfold increase of kinase activity. Phosphotyrosine residues provide docking sites for interacting proteins and so are crucial for FGFR1 function and its regulation. Post-translationally, ubiquitinated. FGFR1 is rapidly ubiquitinated by NEDD4 after autophosphorylation, leading to internalization and lysosomal degradation. CBL is recruited to activated FGFR1 via FRS2 and GRB2, and mediates ubiquitination and subsequent degradation of FGFR1. N-glycosylated in the endoplasmic reticulum. The N-glycan chains undergo further maturation to an Endo H-resistant form in the Golgi apparatus. In terms of tissue distribution, widely expressed.

The protein resides in the cell membrane. It is found in the nucleus. It localises to the cytoplasm. The protein localises to the cytosol. Its subcellular location is the cytoplasmic vesicle. The enzyme catalyses L-tyrosyl-[protein] + ATP = O-phospho-L-tyrosyl-[protein] + ADP + H(+). With respect to regulation, present in an inactive conformation in the absence of bound ligand. Ligand binding leads to dimerization and activation by sequential autophosphorylation on tyrosine residues. In terms of biological role, tyrosine-protein kinase that acts as a cell-surface receptor for fibroblast growth factors and plays an essential role in the regulation of embryonic development, cell proliferation, differentiation and migration. Required for normal mesoderm patterning and correct axial organization during embryonic development, normal skeletogenesis and normal development of the gonadotropin-releasing hormone (GnRH) neuronal system. Phosphorylates PLCG1, FRS2, GAB1 and SHB. Ligand binding leads to the activation of several signaling cascades. Activation of PLCG1 leads to the production of the cellular signaling molecules diacylglycerol and inositol 1,4,5-trisphosphate. Phosphorylation of FRS2 triggers recruitment of GRB2, GAB1, PIK3R1 and SOS1, and mediates activation of RAS, MAPK1/ERK2, MAPK3/ERK1 and the MAP kinase signaling pathway, as well as of the AKT1 signaling pathway. Promotes phosphorylation of SHC1, STAT1 and PTPN11/SHP2. In the nucleus, enhances RPS6KA1 and CREB1 activity and contributes to the regulation of transcription. FGFR1 signaling is down-regulated by IL17RD/SEF, and by FGFR1 ubiquitination, internalization and degradation. This is Fibroblast growth factor receptor 1 (Fgfr1) from Mus musculus (Mouse).